Consider the following 449-residue polypeptide: Glucose-6-phosphate isomerase (449 aa).

The Proton donor role is filled by Glu291. Catalysis depends on residues His312 and Lys426.

Belongs to the GPI family.

The protein resides in the cytoplasm. The catalysed reaction is alpha-D-glucose 6-phosphate = beta-D-fructose 6-phosphate. Its pathway is carbohydrate biosynthesis; gluconeogenesis. It participates in carbohydrate degradation; glycolysis; D-glyceraldehyde 3-phosphate and glycerone phosphate from D-glucose: step 2/4. Catalyzes the reversible isomerization of glucose-6-phosphate to fructose-6-phosphate. This Streptococcus pyogenes serotype M12 (strain MGAS2096) protein is Glucose-6-phosphate isomerase.